Here is a 420-residue protein sequence, read N- to C-terminus: Mitochondrial chaperone BCS1 (420 aa).

Topologically, residues 1–15 (MTLSDFIGALKDNPY) are mitochondrial intermembrane. Residues 16–32 (FGAGFGLVGVGTALAVA) form a helical membrane-spanning segment. Over 33-420 (RKGAQVGMIF…AIKNIAEIKD (388 aa)) the chain is Mitochondrial matrix. Residue 230-237 (GPPGCGKS) coordinates ATP.

This sequence belongs to the AAA ATPase family. BCS1 subfamily.

Its subcellular location is the mitochondrion inner membrane. The catalysed reaction is ATP + H2O = ADP + phosphate + H(+). Its function is as follows. Chaperone necessary for the incorporation of Rieske iron-sulfur protein uqcrfs1 into the mitochondrial respiratory chain complex III. The chain is Mitochondrial chaperone BCS1 (bcs1l) from Danio rerio (Zebrafish).